A 195-amino-acid chain; its full sequence is Translation machinery-associated protein 22 (195 aa).

The region spanning 94–165 (VLIKRIERNR…EAKEYIEKLL (72 aa)) is the SUI1 domain. A disordered region spans residues 176 to 195 (EQVDEKKKKKATAPGATPAA).

Belongs to the DENR family. Interacts with the 40S ribosomal subunit.

The protein resides in the cytoplasm. The polypeptide is Translation machinery-associated protein 22 (TMA22) (Scheffersomyces stipitis (strain ATCC 58785 / CBS 6054 / NBRC 10063 / NRRL Y-11545) (Yeast)).